The following is a 245-amino-acid chain: Octopine transport system permease protein OccM (245 aa).

The next 5 membrane-spanning stretches (helical) occupy residues 12–32 (FVAL…SVAL), 57–77 (FYIF…IYYG), 96–116 (AYWC…AEIM), 163–183 (ILMV…ITGI), and 204–224 (IYLI…WALW). The region spanning 19 to 216 (IPLALQLAVF…ILNFIVARLF (198 aa)) is the ABC transmembrane type-1 domain.

This sequence belongs to the binding-protein-dependent transport system permease family. HisMQ subfamily.

It is found in the cell inner membrane. In terms of biological role, component of the octopine active transport system probably consisting of four subunits: Q, M, P and T. This is Octopine transport system permease protein OccM (occM) from Rhizobium radiobacter (Agrobacterium tumefaciens).